Here is a 395-residue protein sequence, read N- to C-terminus: Flap endonuclease 1 (395 aa).

An N-domain region spans residues 1-104; that stretch reads MGIKHLYQII…GELAKRIARK (104 aa). A Mg(2+)-binding site is contributed by aspartate 34. DNA contacts are provided by arginine 47 and arginine 70. Aspartate 86 provides a ligand contact to Mg(2+). The tract at residues 103 to 123 is disordered; it reads RKQEAAEQHEEAKETGTTEDV. Residues 122–253 form an I-domain region; sequence DVEKFSRRTV…NTALKLIRDH (132 aa). Positions 158, 160, 179, and 181 each coordinate Mg(2+). Residue glutamate 158 coordinates DNA. Glycine 231 and aspartate 233 together coordinate DNA. Residue aspartate 233 coordinates Mg(2+). An interaction with PCNA region spans residues 341-349; it reads QQSRLEGFF. The segment covering 356–389 has biased composition (basic and acidic residues); it reads DEEKASLKRKHEEKLEAAKKKKKEDAKAKREAKS. The disordered stretch occupies residues 356–395; the sequence is DEEKASLKRKHEEKLEAAKKKKKEDAKAKREAKSRPKGTA.

The protein belongs to the XPG/RAD2 endonuclease family. FEN1 subfamily. In terms of assembly, interacts with PCNA. Three molecules of FEN1 bind to one PCNA trimer with each molecule binding to one PCNA monomer. PCNA stimulates the nuclease activity without altering cleavage specificity. Requires Mg(2+) as cofactor. In terms of processing, phosphorylated. Phosphorylation upon DNA damage induces relocalization to the nuclear plasma.

The protein resides in the nucleus. It localises to the nucleolus. The protein localises to the nucleoplasm. Its subcellular location is the mitochondrion. Functionally, structure-specific nuclease with 5'-flap endonuclease and 5'-3' exonuclease activities involved in DNA replication and repair. During DNA replication, cleaves the 5'-overhanging flap structure that is generated by displacement synthesis when DNA polymerase encounters the 5'-end of a downstream Okazaki fragment. It enters the flap from the 5'-end and then tracks to cleave the flap base, leaving a nick for ligation. Also involved in the long patch base excision repair (LP-BER) pathway, by cleaving within the apurinic/apyrimidinic (AP) site-terminated flap. Acts as a genome stabilization factor that prevents flaps from equilibrating into structures that lead to duplications and deletions. Also possesses 5'-3' exonuclease activity on nicked or gapped double-stranded DNA, and exhibits RNase H activity. Also involved in replication and repair of rDNA and in repairing mitochondrial DNA. This is Flap endonuclease 1 from Uncinocarpus reesii (strain UAMH 1704).